A 314-amino-acid polypeptide reads, in one-letter code: Methionyl-tRNA formyltransferase (314 aa).

113–116 (SLLP) provides a ligand contact to (6S)-5,6,7,8-tetrahydrofolate.

Belongs to the Fmt family.

It carries out the reaction L-methionyl-tRNA(fMet) + (6R)-10-formyltetrahydrofolate = N-formyl-L-methionyl-tRNA(fMet) + (6S)-5,6,7,8-tetrahydrofolate + H(+). Functionally, attaches a formyl group to the free amino group of methionyl-tRNA(fMet). The formyl group appears to play a dual role in the initiator identity of N-formylmethionyl-tRNA by promoting its recognition by IF2 and preventing the misappropriation of this tRNA by the elongation apparatus. The sequence is that of Methionyl-tRNA formyltransferase from Ectopseudomonas mendocina (strain ymp) (Pseudomonas mendocina).